The primary structure comprises 149 residues: Calmodulin (149 aa).

Ala-2 bears the N-acetylalanine mark. EF-hand domains lie at 8–43 (EQIA…LGQN), 44–79 (PTEA…KMKD), 81–116 (DTEE…LGEK), and 117–149 (LTDE…MMAK). Ca(2+) contacts are provided by Asp-21, Asp-23, Asp-25, Thr-27, Glu-32, Asp-57, Asp-59, Asn-61, Thr-63, Glu-68, Asp-94, Asp-96, Asn-98, and Glu-105. Lys-116 is modified (N6,N6,N6-trimethyllysine). Ca(2+) is bound by residues Asp-130, Asp-132, Asp-134, Gln-136, and Glu-141.

This sequence belongs to the calmodulin family.

Its function is as follows. Calmodulin mediates the control of a large number of enzymes, ion channels and other proteins by Ca(2+). Among the enzymes to be stimulated by the calmodulin-Ca(2+) complex are a number of protein kinases and phosphatases. The protein is Calmodulin of Karlodinium veneficum (Dinoflagellate).